A 302-amino-acid polypeptide reads, in one-letter code: Haloalkane dehalogenase (302 aa).

In terms of domain architecture, AB hydrolase-1 spans 48-150; that stretch reads PVLLMHGEPS…AGLVIANTGL (103 aa). Aspartate 123 serves as the catalytic Nucleophile. Residue aspartate 249 is the Proton donor of the active site. Histidine 278 (proton acceptor) is an active-site residue.

The protein belongs to the haloalkane dehalogenase family. Type 1 subfamily. Monomer.

The catalysed reaction is 1-haloalkane + H2O = a halide anion + a primary alcohol + H(+). In terms of biological role, catalyzes hydrolytic cleavage of carbon-halogen bonds in halogenated aliphatic compounds, leading to the formation of the corresponding primary alcohols, halide ions and protons. In Caulobacter sp. (strain K31), this protein is Haloalkane dehalogenase.